The following is a 218-amino-acid chain: Ribose-5-phosphate isomerase A (218 aa).

Substrate-binding positions include 28-31 (TGST), 81-84 (DGAD), and 94-97 (KGGG). Glu-103 functions as the Proton acceptor in the catalytic mechanism. Lys-121 lines the substrate pocket.

The protein belongs to the ribose 5-phosphate isomerase family. In terms of assembly, homodimer.

The enzyme catalyses aldehydo-D-ribose 5-phosphate = D-ribulose 5-phosphate. Its pathway is carbohydrate degradation; pentose phosphate pathway; D-ribose 5-phosphate from D-ribulose 5-phosphate (non-oxidative stage): step 1/1. Its function is as follows. Catalyzes the reversible conversion of ribose-5-phosphate to ribulose 5-phosphate. The polypeptide is Ribose-5-phosphate isomerase A (Shewanella piezotolerans (strain WP3 / JCM 13877)).